The chain runs to 589 residues: Mediator of RNA polymerase II transcription subunit 26 (589 aa).

One can recognise a TFIIS N-terminal domain in the interval 10–87 (QMRDRLLQAI…RNWQKLIEPG (78 aa)). Disordered regions lie at residues 83-233 (LIEP…TKLP), 247-320 (ARVD…DGPS), and 363-441 (LETK…PIPE). Over residues 190-213 (LLEKDDEVPSDRIRLEHLDNDRHN) the composition is skewed to basic and acidic residues. The span at 259–268 (SPRYSSSPRS) shows a compositional bias: low complexity. Polar residues predominate over residues 276-297 (KRSTTYAPKGTLSSPSLNSAQV). Basic and acidic residues-rich tracts occupy residues 398–412 (SEDR…RRLT) and 424–435 (TPKESHQEEECH).

The protein belongs to the Mediator complex subunit 26 family. Component of the Mediator complex.

Its subcellular location is the nucleus. Its function is as follows. Component of the Mediator complex, a coactivator involved in the regulated transcription of nearly all RNA polymerase II-dependent genes. Mediator functions as a bridge to convey information from gene-specific regulatory proteins to the basal RNA polymerase II transcription machinery. Mediator is recruited to promoters by direct interactions with regulatory proteins and serves as a scaffold for the assembly of a functional preinitiation complex with RNA polymerase II and the general transcription factors. The sequence is that of Mediator of RNA polymerase II transcription subunit 26 (med26) from Danio rerio (Zebrafish).